Reading from the N-terminus, the 78-residue chain is MSRRCQVRGTKPEFGNNVSHSQRHTKRRWNPNIQKKRYWVPSLGRKVTLTLTPKAIKEIDRRGVDIVVAEMLTRGEKI.

Residues 1-28 form a disordered region; it reads MSRRCQVRGTKPEFGNNVSHSQRHTKRR.

The protein belongs to the bacterial ribosomal protein bL28 family.

The chain is Large ribosomal subunit protein bL28 from Cutibacterium acnes (strain DSM 16379 / KPA171202) (Propionibacterium acnes).